A 1221-amino-acid polypeptide reads, in one-letter code: DNA-directed RNA polymerase subunit beta' (1221 aa).

Zn(2+)-binding residues include Cys-60, Cys-62, Cys-75, and Cys-78. The Mg(2+) site is built by Asp-449, Asp-451, and Asp-453. 4 residues coordinate Zn(2+): Cys-820, Cys-894, Cys-901, and Cys-904.

This sequence belongs to the RNA polymerase beta' chain family. In terms of assembly, the RNAP catalytic core consists of 2 alpha, 1 beta, 1 beta' and 1 omega subunit. When a sigma factor is associated with the core the holoenzyme is formed, which can initiate transcription. It depends on Mg(2+) as a cofactor. Zn(2+) serves as cofactor.

The catalysed reaction is RNA(n) + a ribonucleoside 5'-triphosphate = RNA(n+1) + diphosphate. Its function is as follows. DNA-dependent RNA polymerase catalyzes the transcription of DNA into RNA using the four ribonucleoside triphosphates as substrates. The sequence is that of DNA-directed RNA polymerase subunit beta' from Ligilactobacillus salivarius (strain UCC118) (Lactobacillus salivarius).